The primary structure comprises 355 residues: DNA-binding protein RHL1 (355 aa).

Disordered stretches follow at residues 1-26 (MVRA…KQRK), 181-215 (DFQG…VDNE), and 229-355 (IQVT…SSKA). Residues 14–23 (GGDKDDAESK) show a composition bias toward basic and acidic residues. 2 stretches are compositionally biased toward low complexity: residues 230-246 (QVTP…VTPV) and 260-274 (AETS…SEGN). Composition is skewed to basic and acidic residues over residues 281-296 (KPLL…REES) and 309-326 (LPEE…KDSK). Over residues 344–355 (AGTSKAKSSSKA) the composition is skewed to low complexity.

As to quaternary structure, interacts with BIN4 and TOP6A, but not with TOP6B. In terms of tissue distribution, expressed inproliferating and endoreduplicating cells.

The protein localises to the nucleus. Component of the DNA topoisomerase VI complex involved in chromatin organization and progression of endoreduplication cycles. Binds to DNA. Required for endoreduplication beyond 8C. In Arabidopsis thaliana (Mouse-ear cress), this protein is DNA-binding protein RHL1 (RHL1).